The following is a 137-amino-acid chain: Large ribosomal subunit protein uL16 (137 aa).

The interval 1 to 20 is disordered; that stretch reads MLQPSNRKYRKDFKGRNRGV. Positions 7 to 17 are enriched in basic residues; the sequence is RKYRKDFKGRN.

Belongs to the universal ribosomal protein uL16 family. Part of the 50S ribosomal subunit.

Functionally, binds 23S rRNA and is also seen to make contacts with the A and possibly P site tRNAs. The chain is Large ribosomal subunit protein uL16 from Coxiella burnetii (strain CbuG_Q212) (Coxiella burnetii (strain Q212)).